The chain runs to 421 residues: Ribosomal RNA large subunit methyltransferase G (421 aa).

The interval 389-421 is disordered; that stretch reads EPELEQESDLNSKLDANTEVPHPQSALYGKPKA.

This sequence belongs to the methyltransferase superfamily. RlmG family.

It is found in the cytoplasm. It carries out the reaction guanosine(1835) in 23S rRNA + S-adenosyl-L-methionine = N(2)-methylguanosine(1835) in 23S rRNA + S-adenosyl-L-homocysteine + H(+). Functionally, specifically methylates the guanine in position 1835 (m2G1835) of 23S rRNA. This is Ribosomal RNA large subunit methyltransferase G from Shewanella halifaxensis (strain HAW-EB4).